A 1431-amino-acid chain; its full sequence is Caskin-1 (1431 aa).

ANK repeat units follow at residues 48–77 (DGFSALHHAALNGNTELISLLLEAQAAVDI), 81–110 (KGMRPLHYAAWQGRKEPMKLVLKAGSAVNV), 114–143 (EGHIPLHLAAQHGHYDVSEMLLQHQSNPCM), 147–176 (SGKTPLDLACEFGRVGVVQLLLSSNMCAAL), 188–217 (NGTSPLHLAAKNGHIDIIRLLLQAGIDINR), and 220–249 (KSGTALHEAALCGKTEVVRLLLDSGINAQV). Tyr-253 bears the Phosphotyrosine mark. Residues 281-347 (SAALQVRATK…PSSLGEAIVK (67 aa)) form the SH3 domain. Residues 348–372 (RAGSRTGSEPSPPQGGGSLGPSAPP) are disordered. Residue Ser-358 is modified to Phosphoserine. The CASK-binding stretch occupies residues 375-471 (IWVLRKPFAG…PKKLESASAS (97 aa)). Residue Arg-398 is modified to Omega-N-methylarginine. A compositionally biased stretch (polar residues) spans 420–430 (SQKSVSESSPG). The disordered stretch occupies residues 420–471 (SQKSVSESSPGDSPVKPPEGSSGAARSQPPAAHAGQVYGEQPPKKLESASAS). A phosphoserine mark is found at Ser-423 and Ser-432. SAM domains follow at residues 476–539 (KSAE…LNIP) and 545–609 (HKPA…LAEL). Ser-637 and Ser-650 each carry phosphoserine. A compositionally biased stretch (low complexity) spans 669-679 (LSGPAEAGAAA). 2 disordered regions span residues 669 to 1000 (LSGP…TGSA) and 1016 to 1041 (GGGGRAIRRPPEGHPTPRPASPEPGR). A compositionally biased stretch (polar residues) spans 692–712 (RTTSRESSLSGRARHISSSQE). Phosphoserine occurs at positions 723 and 728. Phosphothreonine is present on Thr-741. Ser-791 carries the phosphoserine modification. Residues 848–860 (PPAPGPAPPPVPA) show a composition bias toward pro residues. Ser-891, Ser-893, and Ser-989 each carry phosphoserine. A compositionally biased stretch (pro residues) spans 1028-1037 (GHPTPRPASP). Position 1067 is a phosphothreonine (Thr-1067). A Phosphoserine modification is found at Ser-1069. Disordered regions lie at residues 1072 to 1372 (VTGL…RQKL) and 1389 to 1410 (KIRQEDGQGPRPSSIEEKSTGS). Residues 1148 to 1160 (DTVKRRPKAKEPD) are compositionally biased toward basic and acidic residues. Residues 1191–1215 (PELPPPPPPAEPPPADLMQLPPLPL) show a composition bias toward pro residues. Residues 1236–1247 (QPVSKIQGSPTP) are compositionally biased toward polar residues. Phosphoserine is present on Ser-1259. Phosphothreonine is present on Thr-1268. Pro residues predominate over residues 1268–1283 (TPPPVSPKPPPPPTAP). Composition is skewed to low complexity over residues 1284–1299 (KPAKALAGLQSSSATP), 1309–1327 (PPAALIKPASSPPSQSASP), and 1345–1359 (PRAAASVVSGPPVAS). Ser-1363 carries the post-translational modification Phosphoserine. Positions 1389 to 1407 (KIRQEDGQGPRPSSIEEKS) are enriched in basic and acidic residues.

In terms of assembly, binds the CaM kinase domain of CASK. Forms a ternary complex with CASK and LIN7A, LIN7B or LIN7C. Competes with APBA1 that forms a similar complex with CASK and LIN7 proteins. The tripartite complex CASKIN1/CASK/LIN7(A/B/C) binds the cytoplasmic tail of NRXN1. Polymerizes, via the tandem SAM domains, to form long, 8 nM wide fibers, upon which other proteins can assemble.

The protein localises to the cytoplasm. May link the scaffolding protein CASK to downstream intracellular effectors. The protein is Caskin-1 (Caskin1) of Mus musculus (Mouse).